We begin with the raw amino-acid sequence, 203 residues long: Small ribosomal subunit protein uS4 (203 aa).

Residues 92-164 enclose the S4 RNA-binding domain; it reads TRLDSVVYLL…LEENRIRNVP (73 aa).

This sequence belongs to the universal ribosomal protein uS4 family. In terms of assembly, part of the 30S ribosomal subunit. Contacts protein S5. The interaction surface between S4 and S5 is involved in control of translational fidelity.

In terms of biological role, one of the primary rRNA binding proteins, it binds directly to 16S rRNA where it nucleates assembly of the body of the 30S subunit. Its function is as follows. With S5 and S12 plays an important role in translational accuracy. The protein is Small ribosomal subunit protein uS4 of Opitutus terrae (strain DSM 11246 / JCM 15787 / PB90-1).